The primary structure comprises 456 residues: tRNA modification GTPase MnmE (456 aa).

Residues Arg24, Glu81, and Lys120 each coordinate (6S)-5-formyl-5,6,7,8-tetrahydrofolate. One can recognise a TrmE-type G domain in the interval 216–379 (GMTVVIAGRP…LREHLKACMG (164 aa)). Asn226 is a K(+) binding site. Residues 226-231 (NAGKSS), 245-251 (TEIAGTT), 270-273 (DTAG), 335-338 (NKAD), and 359-361 (SAR) contribute to the GTP site. Residue Ser230 participates in Mg(2+) binding. Residues Thr245, Ile247, and Thr250 each contribute to the K(+) site. Thr251 contacts Mg(2+). Lys456 lines the (6S)-5-formyl-5,6,7,8-tetrahydrofolate pocket.

It belongs to the TRAFAC class TrmE-Era-EngA-EngB-Septin-like GTPase superfamily. TrmE GTPase family. In terms of assembly, homodimer. Heterotetramer of two MnmE and two MnmG subunits. It depends on K(+) as a cofactor.

It is found in the cytoplasm. Exhibits a very high intrinsic GTPase hydrolysis rate. Involved in the addition of a carboxymethylaminomethyl (cmnm) group at the wobble position (U34) of certain tRNAs, forming tRNA-cmnm(5)s(2)U34. In Pseudomonas savastanoi pv. phaseolicola (strain 1448A / Race 6) (Pseudomonas syringae pv. phaseolicola (strain 1448A / Race 6)), this protein is tRNA modification GTPase MnmE.